Here is a 143-residue protein sequence, read N- to C-terminus: Large ribosomal subunit protein uL15 (143 aa).

It belongs to the universal ribosomal protein uL15 family. As to quaternary structure, part of the 50S ribosomal subunit.

In terms of biological role, binds to the 23S rRNA. This Methanococcus aeolicus (strain ATCC BAA-1280 / DSM 17508 / OCM 812 / Nankai-3) protein is Large ribosomal subunit protein uL15.